The following is a 1257-amino-acid chain: Liprin-alpha-2 (1257 aa).

3 disordered regions span residues 1 to 29 (MMCEVMPTINEDTPMSQRGSQSSGSDSDS), 231 to 265 (ASSEGSTESEHLEGMEPGQKVHEKRLSNGSIDSTD), and 438 to 463 (EGQLEEKNQELQRARQREKMNEEHNK). Residues 16 to 26 (SQRGSQSSGSD) show a composition bias toward low complexity. 3 coiled-coil regions span residues 29–154 (SHFE…SLRM), 185–541 (KALD…SLIE), and 643–695 (HSDA…GLNL). Ser236 carries the post-translational modification Phosphoserine. Phosphothreonine is present on Thr237. The segment covering 238 to 256 (ESEHLEGMEPGQKVHEKRL) has biased composition (basic and acidic residues). Ser239 is subject to Phosphoserine. Residues Ser687 and Ser689 each carry the phosphoserine modification. 2 stretches are compositionally biased toward low complexity: residues 709 to 725 (TASSLASSSPPSGHSTP) and 798 to 813 (SSLSVSLEPESLGLGS). Disordered regions lie at residues 709-738 (TASSLASSSPPSGHSTPKLTPRSPAREMDR) and 790-834 (SSYH…KSSI). Phosphoserine is present on residues Ser817 and Ser820. SAM domains lie at 898 to 964 (WDGP…MVSL), 1020 to 1084 (NHEW…LKRL), and 1108 to 1177 (WSND…LLAL). Residues 1081 to 1107 (LKRLNYDRKELERRREASQHEIKDVLV) are a coiled coil.

This sequence belongs to the liprin family. Liprin-alpha subfamily. As to quaternary structure, forms homodimers and heterodimers with liprins-alpha and liprins-beta. Interacts with the second PTPase domain of PTPRD, PTPRF and PTPRS. Interacts with KIF1A; the interaction decreases in presence of calcium. As to expression, expressed only in brain.

The protein localises to the cytoplasm. The protein resides in the cell surface. Its subcellular location is the cell projection. It localises to the dendritic spine. Functionally, alters PTPRF cellular localization and induces PTPRF clustering. May regulate the disassembly of focal adhesions. May localize receptor-like tyrosine phosphatases type 2A at specific sites on the plasma membrane, possibly regulating their interaction with the extracellular environment and their association with substrates. In neuronal cells, is a scaffolding protein in the dendritic spines which acts as immobile postsynaptic post able to recruit KIF1A-driven dense core vesicles to dendritic spines. This Homo sapiens (Human) protein is Liprin-alpha-2 (PPFIA2).